Reading from the N-terminus, the 300-residue chain is 4-hydroxy-tetrahydrodipicolinate synthase (300 aa).

Thr-45 provides a ligand contact to pyruvate. Tyr-140 functions as the Proton donor/acceptor in the catalytic mechanism. Lys-169 serves as the catalytic Schiff-base intermediate with substrate. Ile-210 is a pyruvate binding site.

The protein belongs to the DapA family. In terms of assembly, homotetramer; dimer of dimers.

The protein resides in the cytoplasm. The catalysed reaction is L-aspartate 4-semialdehyde + pyruvate = (2S,4S)-4-hydroxy-2,3,4,5-tetrahydrodipicolinate + H2O + H(+). Its pathway is amino-acid biosynthesis; L-lysine biosynthesis via DAP pathway; (S)-tetrahydrodipicolinate from L-aspartate: step 3/4. Catalyzes the condensation of (S)-aspartate-beta-semialdehyde [(S)-ASA] and pyruvate to 4-hydroxy-tetrahydrodipicolinate (HTPA). The polypeptide is 4-hydroxy-tetrahydrodipicolinate synthase (Helicobacter pylori (strain J99 / ATCC 700824) (Campylobacter pylori J99)).